The chain runs to 67 residues: MNLALMKMWFALGSMGLMFLAVASIYLSRFKCQNRFLKIAISSFAYMCMLISGIIVFVVVFSGPVNE.

A run of 2 helical transmembrane segments spans residues 8-28 (MWFA…IYLS) and 41-61 (ISSF…VVVF).

Its subcellular location is the cell membrane. This is an uncharacterized protein from Bacillus subtilis (strain 168).